Here is a 212-residue protein sequence, read N- to C-terminus: Claudin-7-A (212 aa).

Residues 1-7 (MANSGVQ) lie on the Cytoplasmic side of the membrane. Residues 8-28 (LLGFGLSLIGIIGLIVGTILP) traverse the membrane as a helical segment. At 29–81 (QWKMSAYVGDSIITAVATYQGLWMSCAFQSTGQLQCKIYDSILQLDSDLQATR) the chain is on the extracellular side. A helical transmembrane segment spans residues 82 to 102 (ALMIVGIIVSIAGLGVASIGM). Topologically, residues 103-119 (KCTTCGADDKVRKTRTA) are cytoplasmic. Residues 120 to 140 (MTGGIILLVGALCAVVACSWF) form a helical membrane-spanning segment. Over 141–162 (AHNVIRAFYNPFTPVNTKFEFG) the chain is Extracellular. Residues 163 to 183 (AAIFIAWGGSFLDVLGGAMLA) traverse the membrane as a helical segment. Over 184 to 212 (ASCPRSKQVSKYPKSNSTRSANGSNKEYV) the chain is Cytoplasmic. The interval 191-212 (QVSKYPKSNSTRSANGSNKEYV) is disordered.

This sequence belongs to the claudin family.

Its subcellular location is the cell junction. The protein localises to the tight junction. The protein resides in the cell membrane. Its function is as follows. Plays a major role in tight junction-specific obliteration of the intercellular space. In Danio rerio (Zebrafish), this protein is Claudin-7-A.